A 155-amino-acid polypeptide reads, in one-letter code: Small ribosomal subunit protein uS7cz/uS7cy (155 aa).

Belongs to the universal ribosomal protein uS7 family. As to quaternary structure, part of the 30S ribosomal subunit.

Its subcellular location is the plastid. It is found in the chloroplast. Its function is as follows. One of the primary rRNA binding proteins, it binds directly to 16S rRNA where it nucleates assembly of the head domain of the 30S subunit. The protein is Small ribosomal subunit protein uS7cz/uS7cy (rps7-A) of Lemna minor (Common duckweed).